Here is a 225-residue protein sequence, read N- to C-terminus: MNSIHSANSNTVSTSEINTSQIPTDSLESIRNRLNQVHLSLRKLSDQINHHNRHPNKVKLPNYAQFQNQFQVLLTQLHTITSDLENNDELLKNTNVYPLPSFPTTQQEGLITTLLRKKPLPEVDEWIESAIDKRKNEYVNVQKDDEFAQWCLTKIEELREDFQFYGFNSVEELKYLDSEDEKKETEENKKIENQKYEEELKITAGGKSGLHPNRVLKFMCQGVLT.

The disordered stretch occupies residues 1–24 (MNSIHSANSNTVSTSEINTSQIPT). Residues 170–204 (VEELKYLDSEDEKKETEENKKIENQKYEEELKITA) are a coiled coil.

The protein belongs to the Mediator complex subunit 8 family. Component of the Mediator complex.

The protein resides in the nucleus. Component of the Mediator complex, a coactivator involved in the regulated transcription of nearly all RNA polymerase II-dependent genes. Mediator functions as a bridge to convey information from gene-specific regulatory proteins to the basal RNA polymerase II transcription machinery. Mediator is recruited to promoters by direct interactions with regulatory proteins and serves as a scaffold for the assembly of a functional preinitiation complex with RNA polymerase II and the general transcription factors. This is Mediator of RNA polymerase II transcription subunit 8 (MED8) from Debaryomyces hansenii (strain ATCC 36239 / CBS 767 / BCRC 21394 / JCM 1990 / NBRC 0083 / IGC 2968) (Yeast).